Consider the following 90-residue polypeptide: Albumin-1 (90 aa).

A signal peptide is located at residue Ala-1. Disulfide bonds link Cys-4-Cys-21, Cys-8-Cys-23, and Cys-16-Cys-34. The propeptide occupies Leu-40–Ile-47.

Post-translationally, the C-terminal glycine may be removed from A1b.

In terms of biological role, A1b binds to basic 7S globulin (BG) and stimulates its phosphorylation activity. This Phaseolus angularis (Azuki bean) protein is Albumin-1 (LEG).